A 356-amino-acid chain; its full sequence is Histidinol-phosphate aminotransferase (356 aa).

An N6-(pyridoxal phosphate)lysine modification is found at lysine 208.

It belongs to the class-II pyridoxal-phosphate-dependent aminotransferase family. Histidinol-phosphate aminotransferase subfamily. Homodimer. It depends on pyridoxal 5'-phosphate as a cofactor.

It carries out the reaction L-histidinol phosphate + 2-oxoglutarate = 3-(imidazol-4-yl)-2-oxopropyl phosphate + L-glutamate. It participates in amino-acid biosynthesis; L-histidine biosynthesis; L-histidine from 5-phospho-alpha-D-ribose 1-diphosphate: step 7/9. This is Histidinol-phosphate aminotransferase from Lactococcus lactis subsp. cremoris (strain MG1363).